We begin with the raw amino-acid sequence, 409 residues long: Nucleoprotein (409 aa).

4 disordered regions span residues 1 to 32 (MASGKATGKTDAPAPVIKLGGPKPPKVGSSGN), 46 to 68 (IPPPKFEGSGVPDNENLKSSQQH), 164 to 196 (RSGRSTAASSAASSRAPSREVSRGRRSGSEDDL), and 238 to 258 (VDQVFGPRTKGKEGNFGDDKM). Over residues 15-31 (PVIKLGGPKPPKVGSSG) the composition is skewed to low complexity. An RNA-binding region spans residues 29–160 (SSGNASWFQA…GNFRWDFIPL (132 aa)). The CoV N NTD domain occupies 31 to 156 (GNASWFQAIK…GGPDGNFRWD (126 aa)). The segment covering 166 to 179 (GRSTAASSAASSRA) has biased composition (low complexity). 2 stretches are compositionally biased toward basic and acidic residues: residues 180–192 (PSREVSRGRRSGS) and 247–258 (KGKEGNFGDDKM). Phosphoserine; by host is present on residues Ser-190 and Ser-192. A CoV N CTD domain is found at 215–331 (TKAKADEMAH…QCVDGVGTRP (117 aa)). The interval 226-333 (RYCKRTIPPN…VDGVGTRPKD (108 aa)) is dimerization. The cysteines at positions 320 and 323 are disulfide-linked. A disordered region spans residues 326–409 (GVGTRPKDDE…GDAALGENEL (84 aa)). Residues 358-367 (QRPKKEKKPK) are compositionally biased toward basic residues. Positions 368-384 (KHDDEVDKALTSDEERN) are enriched in basic and acidic residues. Thr-378 carries the phosphothreonine; by host modification. At Ser-379 the chain carries Phosphoserine; by host.

It belongs to the gammacoronavirus nucleocapsid protein family. As to quaternary structure, homooligomer. Both monomeric and oligomeric forms interact with RNA. Interacts with protein M. Interacts with NSP3; this interaction serves to tether the genome to the newly translated replicase-transcriptase complex at a very early stage of infection. ADP-ribosylated. The ADP-ribosylation is retained in the virion during infection. Post-translationally, phosphorylated on serine and threonine residues.

It localises to the virion. Its subcellular location is the host endoplasmic reticulum-Golgi intermediate compartment. The protein localises to the host Golgi apparatus. Packages the positive strand viral genome RNA into a helical ribonucleocapsid (RNP) and plays a fundamental role during virion assembly through its interactions with the viral genome and membrane protein M. Plays an important role in enhancing the efficiency of subgenomic viral RNA transcription as well as viral replication. The chain is Nucleoprotein from Avian infectious bronchitis virus (strain M41) (IBV).